We begin with the raw amino-acid sequence, 359 residues long: UDP-N-acetylglucosamine--N-acetylmuramyl-(pentapeptide) pyrophosphoryl-undecaprenol N-acetylglucosamine transferase (359 aa).

UDP-N-acetyl-alpha-D-glucosamine contacts are provided by residues Thr15–Gly17, Asn127, Arg166, Ser191, Ile245, Ala264–Glu269, and Gln290.

The protein belongs to the glycosyltransferase 28 family. MurG subfamily.

It localises to the cell inner membrane. The catalysed reaction is di-trans,octa-cis-undecaprenyl diphospho-N-acetyl-alpha-D-muramoyl-L-alanyl-D-glutamyl-meso-2,6-diaminopimeloyl-D-alanyl-D-alanine + UDP-N-acetyl-alpha-D-glucosamine = di-trans,octa-cis-undecaprenyl diphospho-[N-acetyl-alpha-D-glucosaminyl-(1-&gt;4)]-N-acetyl-alpha-D-muramoyl-L-alanyl-D-glutamyl-meso-2,6-diaminopimeloyl-D-alanyl-D-alanine + UDP + H(+). The protein operates within cell wall biogenesis; peptidoglycan biosynthesis. Its function is as follows. Cell wall formation. Catalyzes the transfer of a GlcNAc subunit on undecaprenyl-pyrophosphoryl-MurNAc-pentapeptide (lipid intermediate I) to form undecaprenyl-pyrophosphoryl-MurNAc-(pentapeptide)GlcNAc (lipid intermediate II). This Pseudomonas putida (strain ATCC 47054 / DSM 6125 / CFBP 8728 / NCIMB 11950 / KT2440) protein is UDP-N-acetylglucosamine--N-acetylmuramyl-(pentapeptide) pyrophosphoryl-undecaprenol N-acetylglucosamine transferase.